Reading from the N-terminus, the 483-residue chain is Cytochrome P450 monooxygenase stcF (483 aa).

Position 424 (cysteine 424) interacts with heme.

The protein belongs to the cytochrome P450 family. Requires heme as cofactor.

It participates in mycotoxin biosynthesis; sterigmatocystin biosynthesis. Its function is as follows. Cytochrome P450 monooxygenase; part of the gene cluster that mediates the biosynthesis of sterigmatocystin (ST), a polyketide-derived furanocoumarin which is part of the most toxic and carcinogenic compounds among the known mycotoxins. The first step in the biosynthesis of sterigmatocystin is the production of hexanoate by the fatty acid synthase (FAS) units stcJ and stcK. The polyketide backbone is assembled by the non-reducing polyketide synthase stcA by condensation of the starter hexanoyl-CoA and 7 malonyl-CoA extender units followed by cyclization and release of norsolorinic acid. Norsolorinic acid is the first stable intermediate in the biosynthesis of sterigmatocystin and is converted into averantin (AVN) by the ketoreductase stcE which reduces the hexanoate ketone to an alcohol. Averantin is then oxidized into 5'-hydroxyaverantin (HAVN) by the cytochrome P450 monooxygenase stcF. 5'-hydroxyaverantin is further converted to 5'-oxyaverantin (OAVN) by the 5'-hydroxyaverantin dehydrogenase stcG. The next step is the conversion of OAVN into averufin (AVF) which is catalyzed by a yet to be identified enzyme. The cytochrome P450 monooxygenase stcB and the flavin-binding monooxygenase stcW are both required for the conversion of averufin to 1-hydroxyversicolorone. The esterase stcI probably catalyzes the formation of versiconal hemiacetal acetate from 1-hydroxyversicolorone. The oxydoreductase stcN then probably catalyzes the biosynthetic step from versiconal to versicolorin B (VERB). The next step is performed by the versicolorin B desaturase stcL to produce versicolorin A (VERA). The ketoreductase stcU and the cytochrome P450 monooxygenase stcS are involved in the conversion of versicolorin A to demethylsterigmatocystin. The Baeyer-Villiger oxidas stcQ and the reductase stcR might be involved in the biosynthetic step from versicolorin A to demethylsterigmatocystin. The final step in the biosynthesis of sterigmatocystin is the methylation of demethylsterigmatocystin catalyzed by the methyltransferase stcP. The chain is Cytochrome P450 monooxygenase stcF from Emericella nidulans (strain FGSC A4 / ATCC 38163 / CBS 112.46 / NRRL 194 / M139) (Aspergillus nidulans).